We begin with the raw amino-acid sequence, 193 residues long: Penicillin-binding protein activator LpoB (193 aa).

Residues 1-16 (MKRYLSVALAALVLTG) form the signal peptide. Cysteine 17 carries the N-palmitoyl cysteine lipid modification. Residue cysteine 17 is the site of S-diacylglycerol cysteine attachment. Residues 24–55 (EPTTPPVTIEPVTPPVPETPPPVDNVPPPPKM) form a disordered region. Pro residues predominate over residues 35-54 (VTPPVPETPPPVDNVPPPPK).

Belongs to the LpoB family. As to quaternary structure, interacts with PBP1b.

The protein resides in the cell outer membrane. Functionally, regulator of peptidoglycan synthesis that is essential for the function of penicillin-binding protein 1B (PBP1b). The polypeptide is Penicillin-binding protein activator LpoB (Yersinia enterocolitica serotype O:8 / biotype 1B (strain NCTC 13174 / 8081)).